The sequence spans 1004 residues: UPF0182 protein Mflv_4654 (1004 aa).

Transmembrane regions (helical) follow at residues 18–38 (FLIA…RFID), 63–83 (LVIF…GLAL), 114–134 (LIGI…GQSY), 176–196 (FVGV…FGGI), 211–231 (IQLI…YWFD), 260–280 (KLIL…AIFL), and 288–308 (IGVV…PLVV). Residues 896-940 (PGADATATGPAATEPPAGQAPQTQGNNTAPPAAQPPNRQGQAPAG) are compositionally biased toward low complexity. Positions 896–960 (PGADATATGP…TGPTQLSAAK (65 aa)) are disordered.

The protein belongs to the UPF0182 family.

The protein localises to the cell membrane. This Mycolicibacterium gilvum (strain PYR-GCK) (Mycobacterium gilvum (strain PYR-GCK)) protein is UPF0182 protein Mflv_4654.